The following is a 258-amino-acid chain: Coiled-coil domain-containing protein 127 (258 aa).

Residues 50-170 (KEIEKEKEAC…EEALAERQSI (121 aa)) adopt a coiled-coil conformation.

This is Coiled-coil domain-containing protein 127 (CCDC127) from Sus scrofa (Pig).